Consider the following 353-residue polypeptide: D-alanine--D-alanine ligase (353 aa).

An ATP-grasp domain is found at 141–349 (KAALAGAGLA…LEQLVHELLE (209 aa)). 176-231 (ESGLCYPCFIKPANLGSSVGISKARNREELIHGLRLAATLDPRLVVEQGVQARELE) contacts ATP. Positions 302, 316, and 318 each coordinate Mg(2+).

Belongs to the D-alanine--D-alanine ligase family. Requires Mg(2+) as cofactor. Mn(2+) serves as cofactor.

The protein resides in the cytoplasm. The catalysed reaction is 2 D-alanine + ATP = D-alanyl-D-alanine + ADP + phosphate + H(+). It functions in the pathway cell wall biogenesis; peptidoglycan biosynthesis. Its function is as follows. Cell wall formation. The chain is D-alanine--D-alanine ligase from Parasynechococcus marenigrum (strain WH8102).